Here is a 599-residue protein sequence, read N- to C-terminus: Kelch-like protein 24a (599 aa).

One can recognise a BTB domain in the interval 65-132 (TDVIISVQGR…VYTGRACITT (68 aa)). Residues 167–269 (CLGIQRFADA…HPNYFVQTVE (103 aa)) form the BACK domain. Kelch repeat units lie at residues 313–362 (VIVV…ALRN), 364–406 (IILS…VLLG), 407–453 (KVYA…SCAG), 455–501 (LFVI…SLNH), 503–543 (IYVC…VCNG), and 545–591 (IYIL…TVHR).

In terms of assembly, forms homodimers. Component of the BCR(KLHL24) E3 ubiquitin ligase complex.

It is found in the perikaryon. Its subcellular location is the cell projection. It localises to the axon. The protein localises to the cytoplasm. The protein resides in the cell junction. It is found in the desmosome. Its subcellular location is the adherens junction. Its function is as follows. Necessary to maintain the balance between intermediate filament stability and degradation, a process that is essential for skin integrity. Reduces kainate receptor-mediated currents in brain neurons, most probably by modulating channel properties. It is required for proper heart development. This chain is Kelch-like protein 24a, found in Danio rerio (Zebrafish).